The following is a 154-amino-acid chain: MGLSDGEWTLVLNAWGKVEADVAGHGQEVLIRLFTGHPETLEKFDKFKHLKTGAEMKASEDLKKHGNTVLTALGGILKKKGHHEAEVKHLAESHANKHKIPVKYLEFISDAIIHVLHAKHPSDFGADAQGAMSKALELFRNDMAAQYKVLGFQG.

Positions G2–K148 constitute a Globin domain. Position 4 is a phosphoserine (S4). H65 contributes to the nitrite binding site. H65 lines the O2 pocket. The residue at position 68 (T68) is a Phosphothreonine. Residue H94 participates in heme b binding.

It belongs to the globin family. Monomeric.

The protein localises to the cytoplasm. The protein resides in the sarcoplasm. It catalyses the reaction Fe(III)-heme b-[protein] + nitric oxide + H2O = Fe(II)-heme b-[protein] + nitrite + 2 H(+). The catalysed reaction is H2O2 + AH2 = A + 2 H2O. In terms of biological role, monomeric heme protein which primary function is to store oxygen and facilitate its diffusion within muscle tissues. Reversibly binds oxygen through a pentacoordinated heme iron and enables its timely and efficient release as needed during periods of heightened demand. Depending on the oxidative conditions of tissues and cells, and in addition to its ability to bind oxygen, it also has a nitrite reductase activity whereby it regulates the production of bioactive nitric oxide. Under stress conditions, like hypoxia and anoxia, it also protects cells against reactive oxygen species thanks to its pseudoperoxidase activity. This Capra hircus (Goat) protein is Myoglobin.